Here is a 228-residue protein sequence, read N- to C-terminus: Ribonuclease 3 (228 aa).

In terms of domain architecture, RNase III spans 5-134 (RSKLEKDYGI…FLGALLLDKG (130 aa)). Glutamate 47 lines the Mg(2+) pocket. Aspartate 51 is an active-site residue. Mg(2+) is bound by residues aspartate 120 and glutamate 123. Residue glutamate 123 is part of the active site. Positions 160 to 228 (DYKTSLQELL…AAKNALATLQ (69 aa)) constitute a DRBM domain.

Belongs to the ribonuclease III family. Homodimer. It depends on Mg(2+) as a cofactor.

The protein resides in the cytoplasm. The catalysed reaction is Endonucleolytic cleavage to 5'-phosphomonoester.. In terms of biological role, digests double-stranded RNA. Involved in the processing of primary rRNA transcript to yield the immediate precursors to the large and small rRNAs (23S and 16S). Processes some mRNAs, and tRNAs when they are encoded in the rRNA operon. Processes pre-crRNA and tracrRNA of type II CRISPR loci if present in the organism. The polypeptide is Ribonuclease 3 (Streptococcus agalactiae serotype III (strain NEM316)).